A 123-amino-acid chain; its full sequence is DNA-directed RNA polymerase I subunit RPA12 (123 aa).

Zn(2+)-binding residues include Cys17, Cys20, Cys35, Cys38, Cys84, and Cys87. The C4-type zinc-finger motif lies at 17 to 38 (CPDCGSVLPLPGVQDAVACTRC). The TFIIS-type zinc-finger motif lies at 80–120 (VDRRCSRCGHEGMAYHTRQMRSADEGQTVFYTCTNCKFQEK). The Hairpin signature appears at 103–104 (DE). Cys112 and Cys115 together coordinate Zn(2+).

This sequence belongs to the archaeal RpoM/eukaryotic RPA12/RPB9/RPC11 RNA polymerase family. Component of the RNA polymerase I (Pol I) complex consisting of at least 13 subunits.

It localises to the nucleus. It is found in the nucleolus. Its function is as follows. Core component of RNA polymerase I (Pol I), a DNA-dependent RNA polymerase which synthesizes ribosomal RNA precursors using the four ribonucleoside triphosphates as substrates. Can mediate Pol I proofreading of the nascent RNA transcript. Anchors into the Pol I active site to monitor transcription fidelity and cleave mis-incorporated 5'-ribonucleotides. This Bos taurus (Bovine) protein is DNA-directed RNA polymerase I subunit RPA12.